The following is a 202-amino-acid chain: Phosphoenolpyruvate guanylyltransferase (202 aa).

Phosphoenolpyruvate-binding residues include Thr-140, Gly-156, and Ser-159.

This sequence belongs to the CofC family.

It carries out the reaction phosphoenolpyruvate + GTP + H(+) = enolpyruvoyl-2-diphospho-5'-guanosine + diphosphate. The protein operates within cofactor biosynthesis; coenzyme F420 biosynthesis. Guanylyltransferase that catalyzes the activation of phosphoenolpyruvate (PEP) as enolpyruvoyl-2-diphospho-5'-guanosine, via the condensation of PEP with GTP. It is involved in the biosynthesis of coenzyme F420, a hydride carrier cofactor. This chain is Phosphoenolpyruvate guanylyltransferase, found in Chloroflexus aggregans (strain MD-66 / DSM 9485).